The primary structure comprises 476 residues: ATP synthase subunit beta (476 aa).

161-168 (GGAGVGKT) serves as a coordination point for ATP.

The protein belongs to the ATPase alpha/beta chains family. As to quaternary structure, F-type ATPases have 2 components, CF(1) - the catalytic core - and CF(0) - the membrane proton channel. CF(1) has five subunits: alpha(3), beta(3), gamma(1), delta(1), epsilon(1). CF(0) has three main subunits: a(1), b(2) and c(9-12). The alpha and beta chains form an alternating ring which encloses part of the gamma chain. CF(1) is attached to CF(0) by a central stalk formed by the gamma and epsilon chains, while a peripheral stalk is formed by the delta and b chains.

Its subcellular location is the cell membrane. It carries out the reaction ATP + H2O + 4 H(+)(in) = ADP + phosphate + 5 H(+)(out). Produces ATP from ADP in the presence of a proton gradient across the membrane. The catalytic sites are hosted primarily by the beta subunits. The polypeptide is ATP synthase subunit beta (Mycolicibacterium gilvum (strain PYR-GCK) (Mycobacterium gilvum (strain PYR-GCK))).